A 263-amino-acid chain; its full sequence is N-acyl homoserine lactonase AttM (263 aa).

Residues H103, H105, D107, H108, H180, D202, and H247 each contribute to the Zn(2+) site.

This sequence belongs to the metallo-beta-lactamase superfamily. Zn(2+) is required as a cofactor.

It carries out the reaction an N-acyl-L-homoserine lactone + H2O = an N-acyl-L-homoserine + H(+). The chain is N-acyl homoserine lactonase AttM from Azorhizobium caulinodans (strain ATCC 43989 / DSM 5975 / JCM 20966 / LMG 6465 / NBRC 14845 / NCIMB 13405 / ORS 571).